A 157-amino-acid chain; its full sequence is Ribonuclease (157 aa).

Positions 1–34 (MMKMEGIALKKRLSWISVCLLVLVSAAGMLFSTA) are cleaved as a signal peptide. The propeptide occupies 35-47 (AKTETSSHKAHTE). Glu-120 functions as the Proton acceptor in the catalytic mechanism. Catalysis depends on His-149, which acts as the Proton donor.

It belongs to the ribonuclease N1/T1 family.

It localises to the secreted. Its function is as follows. Hydrolyzes phosphodiester bonds in RNA, poly- and oligoribonucleotides resulting in 3'-nucleoside monophosphates via 2',3'-cyclophosphate intermediates. The chain is Ribonuclease from Bacillus amyloliquefaciens (Bacillus velezensis).